A 325-amino-acid polypeptide reads, in one-letter code: Holliday junction branch migration complex subunit RuvB (325 aa).

Residues 1–180 (MKNQLLDAKV…FGIHLKLNFY (180 aa)) form a large ATPase domain (RuvB-L) region. Residues Leu-19, Arg-20, Gly-61, Lys-64, Thr-65, Thr-66, 127 to 129 (EDF), Arg-170, Tyr-180, and Arg-217 contribute to the ATP site. A Mg(2+)-binding site is contributed by Thr-65. Residues 181-251 (SCEELTKIVE…ITDYALNQLG (71 aa)) form a small ATPAse domain (RuvB-S) region. The tract at residues 254 to 325 (KLGLDSSDHK…ITANALKHLH (72 aa)) is head domain (RuvB-H). Residues Arg-290, Arg-309, and Arg-314 each contribute to the DNA site.

Belongs to the RuvB family. As to quaternary structure, homohexamer. Forms an RuvA(8)-RuvB(12)-Holliday junction (HJ) complex. HJ DNA is sandwiched between 2 RuvA tetramers; dsDNA enters through RuvA and exits via RuvB. An RuvB hexamer assembles on each DNA strand where it exits the tetramer. Each RuvB hexamer is contacted by two RuvA subunits (via domain III) on 2 adjacent RuvB subunits; this complex drives branch migration. In the full resolvosome a probable DNA-RuvA(4)-RuvB(12)-RuvC(2) complex forms which resolves the HJ.

It localises to the cytoplasm. It catalyses the reaction ATP + H2O = ADP + phosphate + H(+). Functionally, the RuvA-RuvB-RuvC complex processes Holliday junction (HJ) DNA during genetic recombination and DNA repair, while the RuvA-RuvB complex plays an important role in the rescue of blocked DNA replication forks via replication fork reversal (RFR). RuvA specifically binds to HJ cruciform DNA, conferring on it an open structure. The RuvB hexamer acts as an ATP-dependent pump, pulling dsDNA into and through the RuvAB complex. RuvB forms 2 homohexamers on either side of HJ DNA bound by 1 or 2 RuvA tetramers; 4 subunits per hexamer contact DNA at a time. Coordinated motions by a converter formed by DNA-disengaged RuvB subunits stimulates ATP hydrolysis and nucleotide exchange. Immobilization of the converter enables RuvB to convert the ATP-contained energy into a lever motion, pulling 2 nucleotides of DNA out of the RuvA tetramer per ATP hydrolyzed, thus driving DNA branch migration. The RuvB motors rotate together with the DNA substrate, which together with the progressing nucleotide cycle form the mechanistic basis for DNA recombination by continuous HJ branch migration. Branch migration allows RuvC to scan DNA until it finds its consensus sequence, where it cleaves and resolves cruciform DNA. This is Holliday junction branch migration complex subunit RuvB from Orientia tsutsugamushi (strain Ikeda) (Rickettsia tsutsugamushi).